The primary structure comprises 358 residues: uncharacterized protein (358 aa).

It belongs to the SMP-30/CGR1 family.

This is an uncharacterized protein from Saccharomyces cerevisiae (strain ATCC 204508 / S288c) (Baker's yeast).